We begin with the raw amino-acid sequence, 390 residues long: DNA replication and repair protein RecF (390 aa).

Residue 30 to 37 (GDNAQGKS) participates in ATP binding.

Belongs to the RecF family.

It localises to the cytoplasm. Its function is as follows. The RecF protein is involved in DNA metabolism; it is required for DNA replication and normal SOS inducibility. RecF binds preferentially to single-stranded, linear DNA. It also seems to bind ATP. In Trichodesmium erythraeum (strain IMS101), this protein is DNA replication and repair protein RecF.